A 128-amino-acid chain; its full sequence is Ribonuclease pancreatic (128 aa).

The disordered stretch occupies residues 1–23 (AESSAMKFQRQHVDSEGSSSSNA). Residues Lys7 and Arg10 each contribute to the substrate site. The Proton acceptor role is filled by His12. 4 disulfide bridges follow: Cys26–Cys84, Cys40–Cys95, Cys58–Cys110, and Cys65–Cys72. Substrate is bound by residues 41 to 45 (KPVNT), Lys66, and Arg85. His119 acts as the Proton donor in catalysis.

It belongs to the pancreatic ribonuclease family. Monomer. Interacts with and forms tight 1:1 complexes with RNH1. Dimerization of two such complexes may occur. Interaction with RNH1 inhibits this protein. As to expression, pancreas.

It is found in the secreted. The catalysed reaction is an [RNA] containing cytidine + H2O = an [RNA]-3'-cytidine-3'-phosphate + a 5'-hydroxy-ribonucleotide-3'-[RNA].. It catalyses the reaction an [RNA] containing uridine + H2O = an [RNA]-3'-uridine-3'-phosphate + a 5'-hydroxy-ribonucleotide-3'-[RNA].. Endonuclease that catalyzes the cleavage of RNA on the 3' side of pyrimidine nucleotides. Acts on single-stranded and double-stranded RNA. This chain is Ribonuclease pancreatic (RNASE1), found in Hydrochoerus hydrochaeris (Capybara).